The chain runs to 186 residues: UPF0200 protein Hbut_0338 (186 aa).

Gly13 to Ser20 provides a ligand contact to ATP.

It belongs to the UPF0200 family.

In Hyperthermus butylicus (strain DSM 5456 / JCM 9403 / PLM1-5), this protein is UPF0200 protein Hbut_0338.